The following is a 258-amino-acid chain: MTDERVSADGGMETSFGFRDVGTGEKQPLVNDVFHKVAKRYDVMNDVMSAGLHRVWKDAMIAALNPPRRENYRVLDVAGGTGDIAFRIVEASGRKAHATVLDINGSMLAVGAERARKKGLLGNLEFVEANAEDLPFAANSFDAYTIAFGIRNVPRIEVALKEAYRVLKRGGRLLVLEFSEVEMPLLDRFYDAWSFNAIPKFGKLITGDEAPYQYLVESIRKFPNQRDFAAMIRTAGFGRVSFTNYTGGIAALHSGWKI.

Residues Thr81, Asp102, and 130–131 each bind S-adenosyl-L-methionine; that span reads NA.

Belongs to the class I-like SAM-binding methyltransferase superfamily. MenG/UbiE family.

The enzyme catalyses a 2-demethylmenaquinol + S-adenosyl-L-methionine = a menaquinol + S-adenosyl-L-homocysteine + H(+). It catalyses the reaction a 2-methoxy-6-(all-trans-polyprenyl)benzene-1,4-diol + S-adenosyl-L-methionine = a 5-methoxy-2-methyl-3-(all-trans-polyprenyl)benzene-1,4-diol + S-adenosyl-L-homocysteine + H(+). It participates in quinol/quinone metabolism; menaquinone biosynthesis; menaquinol from 1,4-dihydroxy-2-naphthoate: step 2/2. Its pathway is cofactor biosynthesis; ubiquinone biosynthesis. Methyltransferase required for the conversion of demethylmenaquinol (DMKH2) to menaquinol (MKH2) and the conversion of 2-polyprenyl-6-methoxy-1,4-benzoquinol (DDMQH2) to 2-polyprenyl-3-methyl-6-methoxy-1,4-benzoquinol (DMQH2). In Sinorhizobium fredii (strain NBRC 101917 / NGR234), this protein is Ubiquinone/menaquinone biosynthesis C-methyltransferase UbiE.